We begin with the raw amino-acid sequence, 625 residues long: uncharacterized protein (625 aa).

A DNA-binding region (zn(2)-C6 fungal-type) is located at residues 23–51; it reads CLACRRKKLKCDHGRPCSNCLKRSTIQSC. Positions 93–113 are enriched in polar residues; it reads GTKSQSDYENQQSHNLPSTPS. A disordered region spans residues 93-119; that stretch reads GTKSQSDYENQQSHNLPSTPSADAETQ.

Its subcellular location is the nucleus. It is found in the cytoplasm. The protein localises to the cytoskeleton. The protein resides in the spindle. This is an uncharacterized protein from Schizosaccharomyces pombe (strain 972 / ATCC 24843) (Fission yeast).